Here is a 165-residue protein sequence, read N- to C-terminus: RNA pyrophosphohydrolase (165 aa).

The Nudix hydrolase domain maps to 13–154 (PYRQGVGIML…KRPVYEQVVA (142 aa)). The Nudix box motif lies at 46-67 (GGIDAGEDPETAAWREMEEEIG).

The protein belongs to the Nudix hydrolase family. RppH subfamily. A divalent metal cation serves as cofactor.

In terms of biological role, accelerates the degradation of transcripts by removing pyrophosphate from the 5'-end of triphosphorylated RNA, leading to a more labile monophosphorylated state that can stimulate subsequent ribonuclease cleavage. The protein is RNA pyrophosphohydrolase of Rhodospirillum rubrum (strain ATCC 11170 / ATH 1.1.1 / DSM 467 / LMG 4362 / NCIMB 8255 / S1).